Reading from the N-terminus, the 80-residue chain is Cell division protein ZapB (80 aa).

A coiled-coil region spans residues 3–80 (FEVLEKLEAK…ALLGKMEDVE (78 aa)).

The protein belongs to the ZapB family. In terms of assembly, homodimer. The ends of the coiled-coil dimer bind to each other, forming polymers. Interacts with FtsZ.

The protein resides in the cytoplasm. Functionally, non-essential, abundant cell division factor that is required for proper Z-ring formation. It is recruited early to the divisome by direct interaction with FtsZ, stimulating Z-ring assembly and thereby promoting cell division earlier in the cell cycle. Its recruitment to the Z-ring requires functional FtsA or ZipA. The polypeptide is Cell division protein ZapB (Vibrio vulnificus (strain CMCP6)).